Consider the following 62-residue polypeptide: uncharacterized protein (62 aa).

This is an uncharacterized protein from Methanocaldococcus jannaschii (strain ATCC 43067 / DSM 2661 / JAL-1 / JCM 10045 / NBRC 100440) (Methanococcus jannaschii).